Here is a 200-residue protein sequence, read N- to C-terminus: 3-isopropylmalate dehydratase small subunit (200 aa).

The protein belongs to the LeuD family. LeuD type 1 subfamily. Heterodimer of LeuC and LeuD.

The catalysed reaction is (2R,3S)-3-isopropylmalate = (2S)-2-isopropylmalate. It participates in amino-acid biosynthesis; L-leucine biosynthesis; L-leucine from 3-methyl-2-oxobutanoate: step 2/4. Catalyzes the isomerization between 2-isopropylmalate and 3-isopropylmalate, via the formation of 2-isopropylmaleate. The sequence is that of 3-isopropylmalate dehydratase small subunit from Saccharopolyspora erythraea (strain ATCC 11635 / DSM 40517 / JCM 4748 / NBRC 13426 / NCIMB 8594 / NRRL 2338).